We begin with the raw amino-acid sequence, 369 residues long: Aminomethyltransferase (369 aa).

This sequence belongs to the GcvT family. The glycine cleavage system is composed of four proteins: P, T, L and H.

It carries out the reaction N(6)-[(R)-S(8)-aminomethyldihydrolipoyl]-L-lysyl-[protein] + (6S)-5,6,7,8-tetrahydrofolate = N(6)-[(R)-dihydrolipoyl]-L-lysyl-[protein] + (6R)-5,10-methylene-5,6,7,8-tetrahydrofolate + NH4(+). Functionally, the glycine cleavage system catalyzes the degradation of glycine. In Synechococcus sp. (strain CC9311), this protein is Aminomethyltransferase.